Reading from the N-terminus, the 103-residue chain is Large ribosomal subunit protein uL24 (103 aa).

This sequence belongs to the universal ribosomal protein uL24 family. As to quaternary structure, part of the 50S ribosomal subunit.

Its function is as follows. One of two assembly initiator proteins, it binds directly to the 5'-end of the 23S rRNA, where it nucleates assembly of the 50S subunit. One of the proteins that surrounds the polypeptide exit tunnel on the outside of the subunit. In Treponema pallidum (strain Nichols), this protein is Large ribosomal subunit protein uL24.